We begin with the raw amino-acid sequence, 386 residues long: 17-hydroxy-3-oxo-4-pregnene-20-carboxyl-CoA lyase (386 aa).

Catalysis depends on Tyr292, which acts as the Proton acceptor. Catalysis depends on Tyr342, which acts as the Proton donor.

It belongs to the thiolase-like superfamily. Homodimer. Interacts with the ChsH1/ChsH2 hydratase via the DUF35 C-terminal region of ChsH2 (ChsH2-DUF35). The ChsH1-ChsH2-Ltp2 protein complex is composed of two protomers that form a heterohexameric structure through the Ltp2 dimerization interface.

It carries out the reaction 17-hydroxy-3-oxochol-4-en-22-oyl-CoA = androst-4-ene-3,17-dione + propanoyl-CoA. It participates in steroid metabolism; cholesterol degradation. Its function is as follows. Involved in cholesterol side chain degradation. When associated with the ChsH1/ChsH2 hydratase, catalyzes the retroaldol cleavage of 17-hydroxy-3-oxo-4-pregnene-20-carboxyl-CoA (17-HOPC-CoA) produced by the hydratase, forming androst-4-ene-3,17-dione and propionyl-CoA. The chain is 17-hydroxy-3-oxo-4-pregnene-20-carboxyl-CoA lyase from Mycobacterium tuberculosis (strain ATCC 25618 / H37Rv).